Reading from the N-terminus, the 252-residue chain is Short-chain dehydrogenase/reductase eriH (252 aa).

8 residues coordinate NADP(+): I16, D65, N92, K125, Y158, K162, V191, and T193. Y158 serves as the catalytic Proton acceptor. Y158 acts as the Proton donor in catalysis. The Lowers pKa of active site Tyr role is filled by K162.

This sequence belongs to the short-chain dehydrogenases/reductases (SDR) family.

The catalysed reaction is cyathadiol + reduced [NADPH--hemoprotein reductase] + O2 = cyathatriol + oxidized [NADPH--hemoprotein reductase] + H2O + H(+). The enzyme catalyses 11-O-acetylcyathatriol + A = 11-O-acetylcyathin A3 + AH2. It catalyses the reaction cyathatriol + A = cyathin A3 + AH2. Its pathway is secondary metabolite biosynthesis. Short-chain dehydrogenase/reductase; part of the gene cluster that mediates the biosynthesis of erinacines, cyathane-xylosides that show unique biological activities, including leishmanicidal activity, stimulating activity for nerve growth-factor synthesis, and agonistic activity toward the kappa opioid receptor. Within the pathway, eriH works with eriA to catalyze C-11 hydroxylation of cyathadiol to produce cyathatriol. EriH also catalyzes oxidation of 11-O-acetyl-cyathatriol into 1-O-acetylcyathin A3. In the absence of eriL and eriJ, the SDR eriH is able to convert cyathatriol to cyathin A3; this is likely a switching mechanism in the biosynthesis of cyathins (C-14 ketogroup)and erinacines (C-14 glycosylated group). The first step of the erinacines biosynthesis pathway is catalyzed by the geranylgeranyl diphosphate (GGPP) synthase eriE via conversion of farnesyl pyrophosphate and isopentyl pyrophosphate into geranylgeranyl pyrophosphate (GGPP). GGPP is then substrate of the diterpene cyclase eriG for the production of cyatha-3,12-diene. The cytochrome P450 monooxygenase eriI then hydroxylates cyatha-3,12-diene at C-14 of the seven-membered ring to produce erinacol, which is further hydroxylated at C-15 by the cytochrome P450 monooxygenase eriC to yield cyathadiol. The cytochrome P450 monooxygenase eriA then catalyzes C-11 hydroxylation in the presence of the short chain dehydrogenase/reductase (SDR) eriH, which leads to the production of cyathatriol. The acetyltransferase eriL converts cyathatriol into 11-O-acetyl-cyathatriol. The SDR eriH catalyzes further oxidation of 11-O-acetyl-cyathatriol into 1-O-acetylcyathin A3. Finally, the glycosyl transferase eriJ tranfers xylose from UDP-xylose onto C-14 of 11-O-acetyl-cyathatriol to form eracine Q. EriJ is also able to convert 11-O-acetyl-cyathatriol to eracine Q2 by using UDP-D-glucose as cosubstrate, but at a lower rate. The polypeptide is Short-chain dehydrogenase/reductase eriH (Hericium erinaceus (Lion's mane mushroom)).